A 279-amino-acid chain; its full sequence is Protein phosphatase 1 regulatory subunit 3E (279 aa).

Phosphoserine is present on residues Ser16 and Ser33. Residues 28-89 (RSQRPSLEEE…RSPDTRKRVR (62 aa)) are disordered. Residues 51–65 (ARSRAHVPGRGRRAR) are compositionally biased toward basic residues. The residue at position 66 (Ser66) is a Phosphoserine. The PP1-binding motif signature appears at 87-90 (RVRF). In terms of domain architecture, CBM21 spans 154-259 (AARLQAQRIC…NNGGRDYALL (106 aa)). Residues 176–198 (GSARVLDLAYEKRVSVRWSADGW) form a glycogen-binding motif region. Positions 248-256 (WDNNGGRDY) are substrate-binding motif.

In terms of tissue distribution, expressed in liver and heart, with low levels in skeletal muscle.

Acts as a glycogen-targeting subunit for PP1. PP1 is involved in glycogen metabolism and contributes to the activation of glycogen synthase leading to an increase in glycogen synthesis. The protein is Protein phosphatase 1 regulatory subunit 3E (Ppp1r3e) of Rattus norvegicus (Rat).